The primary structure comprises 242 residues: DNA repair protein RecO (242 aa).

The protein belongs to the RecO family.

Involved in DNA repair and RecF pathway recombination. The polypeptide is DNA repair protein RecO (Paracoccus denitrificans (strain Pd 1222)).